We begin with the raw amino-acid sequence, 640 residues long: Chaperone protein HtpG (640 aa).

Residues 1–343 form an a; substrate-binding region; sequence MQTAENVEHL…SNDLPLNVSR (343 aa). The interval 344 to 564 is b; the sequence is EILQESKDID…THDMSGNLGR (221 aa). Positions 565–640 are c; sequence LLKSAGQKVP…LLLQNILSGK (76 aa).

It belongs to the heat shock protein 90 family. Homodimer.

It is found in the cytoplasm. Molecular chaperone. Has ATPase activity. In Nitrosomonas eutropha (strain DSM 101675 / C91 / Nm57), this protein is Chaperone protein HtpG.